The primary structure comprises 380 residues: Cytochrome b (380 aa).

4 helical membrane passes run 34 to 54, 78 to 99, 114 to 134, and 179 to 199; these read FGSL…LLAM, WLIR…YLHI, WNTG…GYVL, and FFAL…IHLT. The heme b site is built by His84 and His98. Residues His183 and His197 each contribute to the heme b site. His202 provides a ligand contact to a ubiquinone. Helical transmembrane passes span 227–247, 289–309, 321–341, and 348–368; these read LKDI…ALFS, LGGV…PFLH, ISQL…WVGS, and FIII…ILFP.

This sequence belongs to the cytochrome b family. As to quaternary structure, the cytochrome bc1 complex contains 11 subunits: 3 respiratory subunits (MT-CYB, CYC1 and UQCRFS1), 2 core proteins (UQCRC1 and UQCRC2) and 6 low-molecular weight proteins (UQCRH/QCR6, UQCRB/QCR7, UQCRQ/QCR8, UQCR10/QCR9, UQCR11/QCR10 and a cleavage product of UQCRFS1). This cytochrome bc1 complex then forms a dimer. Heme b serves as cofactor.

It localises to the mitochondrion inner membrane. Its function is as follows. Component of the ubiquinol-cytochrome c reductase complex (complex III or cytochrome b-c1 complex) that is part of the mitochondrial respiratory chain. The b-c1 complex mediates electron transfer from ubiquinol to cytochrome c. Contributes to the generation of a proton gradient across the mitochondrial membrane that is then used for ATP synthesis. This chain is Cytochrome b (MT-CYB), found in Puffinus opisthomelas (Black-vented shearwater).